Reading from the N-terminus, the 243-residue chain is Orotidine 5'-phosphate decarboxylase (243 aa).

Residues Asp16, Lys38, 65–74 (DLKLHDIPNT), Thr120, Arg181, Gln190, Gly210, and Arg211 contribute to the substrate site. Lys67 acts as the Proton donor in catalysis.

The protein belongs to the OMP decarboxylase family. Type 1 subfamily. Homodimer.

It catalyses the reaction orotidine 5'-phosphate + H(+) = UMP + CO2. Its pathway is pyrimidine metabolism; UMP biosynthesis via de novo pathway; UMP from orotate: step 2/2. Its function is as follows. Catalyzes the decarboxylation of orotidine 5'-monophosphate (OMP) to uridine 5'-monophosphate (UMP). The sequence is that of Orotidine 5'-phosphate decarboxylase from Bradyrhizobium sp. (strain BTAi1 / ATCC BAA-1182).